A 203-amino-acid polypeptide reads, in one-letter code: ER membrane protein complex subunit 8/9 homolog (203 aa).

The 137-residue stretch at 4–140 (YKVSERAYAK…IQVFNCPGDS (137 aa)) folds into the MPN domain.

It belongs to the EMC8/EMC9 family. As to quaternary structure, component of the ER membrane protein complex (EMC).

The protein localises to the endoplasmic reticulum membrane. Its function is as follows. Part of the endoplasmic reticulum membrane protein complex (EMC) that enables the energy-independent insertion into endoplasmic reticulum membranes of newly synthesized multi-pass membrane proteins like rhodopsins. The chain is ER membrane protein complex subunit 8/9 homolog from Drosophila melanogaster (Fruit fly).